The sequence spans 170 residues: UPF0316 protein CLK_3798 (170 aa).

The next 2 helical transmembrane spans lie at 1-21 (MLSYYAFIFFAKIMEVALMTI) and 36-56 (IIGFIEVTIWLYVTSSVLSGI).

The protein belongs to the UPF0316 family.

The protein resides in the cell membrane. The protein is UPF0316 protein CLK_3798 of Clostridium botulinum (strain Loch Maree / Type A3).